A 953-amino-acid polypeptide reads, in one-letter code: Isoleucine--tRNA ligase (953 aa).

Residues 57–67 carry the 'HIGH' region motif; the sequence is PYANGDIHIGH. L-isoleucyl-5'-AMP is bound at residue glutamate 582. A 'KMSKS' region motif is present at residues 623 to 627; the sequence is KMSKS. ATP is bound at residue lysine 626. Zn(2+) contacts are provided by cysteine 916, cysteine 919, cysteine 936, and cysteine 939.

This sequence belongs to the class-I aminoacyl-tRNA synthetase family. IleS type 1 subfamily. Monomer. Zn(2+) serves as cofactor.

Its subcellular location is the cytoplasm. The catalysed reaction is tRNA(Ile) + L-isoleucine + ATP = L-isoleucyl-tRNA(Ile) + AMP + diphosphate. In terms of biological role, catalyzes the attachment of isoleucine to tRNA(Ile). As IleRS can inadvertently accommodate and process structurally similar amino acids such as valine, to avoid such errors it has two additional distinct tRNA(Ile)-dependent editing activities. One activity is designated as 'pretransfer' editing and involves the hydrolysis of activated Val-AMP. The other activity is designated 'posttransfer' editing and involves deacylation of mischarged Val-tRNA(Ile). The protein is Isoleucine--tRNA ligase of Bordetella parapertussis (strain 12822 / ATCC BAA-587 / NCTC 13253).